Reading from the N-terminus, the 359-residue chain is Pheromone receptor 1 (359 aa).

Transmembrane regions (helical) follow at residues 5-25, 33-53, 71-87, 110-130, 147-167, 206-226, and 268-288; these read VTPF…GWHI, ITLS…SVAW, LRHA…LVIA, IIID…LMIV, FLSL…IVSF, LLVL…GSVS, and LILS…MFGL. Residues 335-359 are disordered; that stretch reads TSGGIDGSPHSEKFSINTPTKYEEA. Over residues 348-359 the composition is skewed to polar residues; the sequence is FSINTPTKYEEA.

This sequence belongs to the G-protein coupled receptor 4 family.

The protein localises to the membrane. Receptor for the A2 pheromone, a prenylated mating factor. The sequence is that of Pheromone receptor 1 (PRA1) from Ustilago hordei (Barley covered smut fungus).